A 355-amino-acid polypeptide reads, in one-letter code: MFENLDSVVDKFKDLEVKVADPEVIADMENWTKLMKEHADLEPVVNKYLSYKDNLKNLEEDKELLGTTGDSEMEELLKDEISTLEEQIEKDQEELKILLLPKDPNDEKNVFIEIRAGAGGDEAGLFAGELLRMYQMYSDKKHWTTEIMDIQQQGVGGIKEVVMMVKGKGAYSRLKYESGVHRVQRVPQTESSGRIHTSTATVAVLPEAEDVDVKIEQKDLRIDVFRASGNGGQCVNTTDSAVRITHIPTGLVVTCQDEKSQIKNKDKAMKVLKSRLYDLMEEEKNKDRADARKSQVGTGDRSERIRTYNFPQGRITDHRINKTIFQLQNFLDGDIEEMIDDLTSYDQAEKLKMMN.

Residue Gln-233 is modified to N5-methylglutamine. A compositionally biased stretch (basic and acidic residues) spans 283 to 293; it reads EKNKDRADARK. A disordered region spans residues 283 to 304; that stretch reads EKNKDRADARKSQVGTGDRSER.

It belongs to the prokaryotic/mitochondrial release factor family. Methylated by PrmC. Methylation increases the termination efficiency of RF1.

The protein localises to the cytoplasm. Its function is as follows. Peptide chain release factor 1 directs the termination of translation in response to the peptide chain termination codons UAG and UAA. In Finegoldia magna (strain ATCC 29328 / DSM 20472 / WAL 2508) (Peptostreptococcus magnus), this protein is Peptide chain release factor 1.